Consider the following 461-residue polypeptide: General transcription and DNA repair factor IIH subunit SSL1 (461 aa).

Residues methionine 1–serine 70 form a disordered region. Basic and acidic residues predominate over residues valine 26 to aspartate 37. Residues histidine 53 to serine 63 are compositionally biased toward basic residues. Residues serine 125–alanine 304 form the VWFA domain. Residues cysteine 349–cysteine 366 form a C4-type zinc finger.

This sequence belongs to the GTF2H2 family. Component of the 7-subunit TFIIH core complex composed of XPB/SSL2, XPD/RAD3, SSL1, TFB1, TFB2, TFB4 and TFB5, which is active in NER. The core complex associates with the 3-subunit CTD-kinase module TFIIK composed of CCL1, KIN28 and TFB3 to form the 10-subunit holoenzyme (holo-TFIIH) active in transcription. An additionnal subunit, TFB6, plays a role in the dissociation of the SSL2 helicase from TFIIH after transcription initiation.

It is found in the nucleus. In terms of biological role, component of the general transcription and DNA repair factor IIH (TFIIH) core complex, which is involved in general and transcription-coupled nucleotide excision repair (NER) of damaged DNA and, when complexed to TFIIK, in RNA transcription by RNA polymerase II. In NER, TFIIH acts by opening DNA around the lesion to allow the excision of the damaged oligonucleotide and its replacement by a new DNA fragment. In transcription, TFIIH has an essential role in transcription initiation. When the pre-initiation complex (PIC) has been established, TFIIH is required for promoter opening and promoter escape. Phosphorylation of the C-terminal tail (CTD) of the largest subunit of RNA polymerase II by the kinase module TFIIK controls the initiation of transcription. The sequence is that of General transcription and DNA repair factor IIH subunit SSL1 (SSL1) from Saccharomyces cerevisiae (strain ATCC 204508 / S288c) (Baker's yeast).